Reading from the N-terminus, the 339-residue chain is MKKILVTGGTGFIGSHTVVSLLKSGHQVVILDNLCNSSINILPRLKTITGQEIPFYQGDIRDREILRRIFAENRIDSVIHFAGLKAVGESVAEPMKYYDNNVSGSLVLAEEMARAGVFSIVFSSSATVYGDPGKVPYTEDMPPGDTTSPYGASKSMVERILTDIQKADPRWSMILLRYFNPIGAHESGLIGEQPNGIPNNLLPYICQVAAGKLPQLAVFGDDYPTPDGTGMRDYIHVMDLAEGHVAAMQAKSNVAGTHLLNLGSGRASSVLEIIRAFEAASGLTIPYEVKPRRAGDLACFYADPSYTKAQIGWQTQRDLTQMMEDSWRWVSNNPNGYDD.

Residues 12–13 (FI), 32–37 (DNLCNS), 59–60 (DI), 81–85 (FAGLK), asparagine 100, serine 125, tyrosine 150, lysine 154, and phenylalanine 179 contribute to the NAD(+) site. Serine 125 and tyrosine 150 together coordinate substrate. Tyrosine 150 functions as the Proton acceptor in the catalytic mechanism. Residues asparagine 180, 200 to 201 (NL), 217 to 219 (AVF), arginine 232, and 293 to 296 (RAGD) contribute to the substrate site.

It belongs to the NAD(P)-dependent epimerase/dehydratase family. In terms of assembly, homodimer. NAD(+) is required as a cofactor.

The enzyme catalyses UDP-alpha-D-glucose = UDP-alpha-D-galactose. Its pathway is carbohydrate metabolism; galactose metabolism. Involved in the metabolism of galactose. Plays an essential role in the incorporation of galactose into meningococcal lipopolysaccharide surface molecules, which are important for pathogenesis. Catalyzes the conversion of UDP-galactose (UDP-Gal) to UDP-glucose (UDP-Glc) through a mechanism involving the transient reduction of NAD. The protein is UDP-glucose 4-epimerase (galE) of Neisseria meningitidis serogroup B (strain ATCC BAA-335 / MC58).